The primary structure comprises 263 residues: Lens fiber major intrinsic protein (263 aa).

At Met-1–Phe-9 the chain is on the cytoplasmic side. The chain crosses the membrane as a helical span at residues Trp-10–Gly-29. Residues Ala-30–Val-41 lie on the Extracellular side of the membrane. Residues Leu-42–Val-59 traverse the membrane as a helical segment. At Gly-60–His-61 the chain is on the cytoplasmic side. Positions Ile-62 to Val-77 form an intramembrane region, discontinuously helical. The NPA 1 signature appears at Asn-68–Ala-70. At Gly-78–Ser-82 the chain is on the cytoplasmic side. The chain crosses the membrane as a helical span at residues Leu-83–Ser-106. At Val-107 to Leu-127 the chain is on the extracellular side. The chain crosses the membrane as a helical span at residues Gly-128 to Thr-148. Over Tyr-149–Arg-156 the chain is Cytoplasmic. Residues Leu-157–Gly-175 traverse the membrane as a helical segment. At Met-176–Tyr-178 the chain is on the extracellular side. The segment at residues Thr-179–Ile-193 is an intramembrane region (discontinuously helical). An NPA 2 motif is present at residues Asn-184–Ala-186. The Extracellular portion of the chain corresponds to Leu-194–Asn-200. The helical transmembrane segment at His-201 to Leu-222 threads the bilayer. The Cytoplasmic portion of the chain corresponds to Leu-223 to Leu-263. Residues Leu-227 to Leu-237 form an interaction with CALM region. Residues Ser-235, Ser-243, and Ser-245 each carry the phosphoserine modification. The tract at residues Ala-240–Leu-263 is disordered. Position 246 is a deamidated asparagine (Asn-246).

The protein belongs to the MIP/aquaporin (TC 1.A.8) family. Homotetramer; each monomer provides an independent water pore. Two homotetramers on opposing membranes can dimerize, forming a cell-cell junction. Interacts with CALM; the calcium-calmodulin/CALM complex interacts with the cytoplasmic domains of two aquaporins, leading to channel closure. Interacts with BFSP1 (via C-terminus); prevents calcium-dependent inhibition of the water channel activity. In terms of processing, subject to partial proteolytic cleavage in the eye lens core. Partial proteolysis promotes interactions between tetramers from adjoining membranes. Fatty acylated at Met-1 and Lys-238. The acyl modifications, in decreasing order of ion abundance, are: oleoyl (C18:1) &gt; palmitoyl (C16:0) &gt; stearoyl (C18:0) &gt; eicosenoyl (C20:1) &gt; dihomo-gamma-linolenoyl (C20:3) &gt; palmitoleoyl (C16:1) &gt; eicosadienoyl (C20:2).

The protein resides in the cell membrane. It is found in the cell junction. It catalyses the reaction H2O(in) = H2O(out). Its activity is regulated as follows. The water channel activity is inhibited by calcium through calmodulin/CALM. Aquaporins form homotetrameric transmembrane channels, with each monomer independently mediating water transport across the plasma membrane along its osmotic gradient. Specifically expressed in lens fiber cells, this aquaporin is crucial for maintaining lens water homeostasis and transparency. Beyond water permeability, it also acts as a cell-to-cell adhesion molecule, forming thin junctions between lens fiber cells that are essential for maintaining the ordered structure and transparency of the lens. This chain is Lens fiber major intrinsic protein, found in Oryctolagus cuniculus (Rabbit).